We begin with the raw amino-acid sequence, 247 residues long: Protein IRON-RELATED TRANSCRIPTION FACTOR 2 (247 aa).

Positions 68–75 (HRKLSHNA) match the Nuclear localization signal motif. Positions 68 to 81 (HRKLSHNAYERDRR) are basic motif. The 52-residue stretch at 68–119 (HRKLSHNAYERDRRKQLNELYSSLRALLPDADHTKLSIPTTVSRVLKYIPEL) folds into the bHLH domain. The segment at 82–119 (KQLNELYSSLRALLPDADHTKLSIPTTVSRVLKYIPEL) is helix-loop-helix motif.

The protein belongs to the bHLH protein family. As to quaternary structure, forms homodimers. Interacts with BHLH156 in the nucleus. Expressed constitutively at low levels in the roots. Also observed in flowers, developing seeds, embryos and vascular bundles.

The protein localises to the nucleus. It localises to the cytoplasm. In terms of biological role, transcription activator that binds to the DNA motif 5'-CACGTGG-3' in the promoter of iron (Fe) deficiency-inducible genes as well as of genes involved in iron homeostasis, thus contributing to basal tolerance to iron deficiency, iron uptake from soil and iron transport, particularly during seed maturation and germination. Promotes the accumulation of mugineic acid family phytosiderophores (MAs). Required for ethylene-mediated signaling during iron deficiency responses. Improves growth and yield, especially in calcareous soil with low iron availability. Promotes iron concentration in shoots and grain. This Oryza sativa subsp. japonica (Rice) protein is Protein IRON-RELATED TRANSCRIPTION FACTOR 2.